We begin with the raw amino-acid sequence, 367 residues long: Glutamate 5-kinase (367 aa).

Position 10 (lysine 10) interacts with ATP. Substrate contacts are provided by serine 50, aspartate 137, and asparagine 149. Position 169-170 (threonine 169–aspartate 170) interacts with ATP. A PUA domain is found at alanine 275–glutamate 353.

The protein belongs to the glutamate 5-kinase family.

It is found in the cytoplasm. The enzyme catalyses L-glutamate + ATP = L-glutamyl 5-phosphate + ADP. It functions in the pathway amino-acid biosynthesis; L-proline biosynthesis; L-glutamate 5-semialdehyde from L-glutamate: step 1/2. Functionally, catalyzes the transfer of a phosphate group to glutamate to form L-glutamate 5-phosphate. The polypeptide is Glutamate 5-kinase (Salmonella paratyphi B (strain ATCC BAA-1250 / SPB7)).